The chain runs to 396 residues: Ribosomal RNA large subunit methyltransferase I (396 aa).

A PUA domain is found at 2 to 79 (SVRLVLAKGR…QAESIDIAFF (78 aa)).

This sequence belongs to the methyltransferase superfamily. RlmI family.

Its subcellular location is the cytoplasm. It carries out the reaction cytidine(1962) in 23S rRNA + S-adenosyl-L-methionine = 5-methylcytidine(1962) in 23S rRNA + S-adenosyl-L-homocysteine + H(+). In terms of biological role, specifically methylates the cytosine at position 1962 (m5C1962) of 23S rRNA. This Citrobacter koseri (strain ATCC BAA-895 / CDC 4225-83 / SGSC4696) protein is Ribosomal RNA large subunit methyltransferase I.